A 601-amino-acid chain; its full sequence is Glutathione-regulated potassium-efflux system protein KefB (601 aa).

13 helical membrane passes run 5–25 (DLLL…PLAA), 29–49 (IGAV…GLGF), 55–75 (EILH…GLEL), 87–107 (IFGV…GLLM), 115–135 (AAVI…LQLM), 152–172 (VLLF…LLAG), 177–197 (HFDW…LIGG), 207–227 (FIAA…LVLG), 230–250 (LFMD…GILL), 261–281 (IAID…VGMA), 284–304 (LGVL…LVAV), 326–346 (FAGV…TAAS), and 356–376 (ALLL…MKLI). The RCK N-terminal domain occupies 400-518 (KPQVIVVGFG…QAGVTNFSRE (119 aa)).

Belongs to the monovalent cation:proton antiporter 2 (CPA2) transporter (TC 2.A.37) family. KefB subfamily. As to quaternary structure, interacts with the regulatory subunit KefG.

The protein resides in the cell inner membrane. Its function is as follows. Pore-forming subunit of a potassium efflux system that confers protection against electrophiles. Catalyzes K(+)/H(+) antiport. The sequence is that of Glutathione-regulated potassium-efflux system protein KefB from Enterobacter sp. (strain 638).